A 139-amino-acid polypeptide reads, in one-letter code: Large-conductance mechanosensitive channel (139 aa).

Transmembrane regions (helical) follow at residues 9–29 (AFAV…GAAF) and 79–99 (IQTV…VKAI).

It belongs to the MscL family. Homopentamer.

The protein localises to the cell inner membrane. Channel that opens in response to stretch forces in the membrane lipid bilayer. May participate in the regulation of osmotic pressure changes within the cell. The polypeptide is Large-conductance mechanosensitive channel (Pseudomonas putida (strain ATCC 700007 / DSM 6899 / JCM 31910 / BCRC 17059 / LMG 24140 / F1)).